A 190-amino-acid polypeptide reads, in one-letter code: Elongation factor P-like protein (190 aa).

This sequence belongs to the elongation factor P family.

In Cronobacter sakazakii (strain ATCC BAA-894) (Enterobacter sakazakii), this protein is Elongation factor P-like protein.